A 76-amino-acid chain; its full sequence is Small integral membrane protein 7 (76 aa).

The N-terminal stretch at 1–17 is a signal peptide; the sequence is MIGDLLLFGTLLVNAGA. Residues 18–54 are Extracellular-facing; it reads VLNFKLKKKESQGFGDDLMTEATTGDNIREFLLSLRY. A helical transmembrane segment spans residues 55–75; the sequence is FRIFIALWNIFMMFCMIVLFG. Position 76 (serine 76) is a topological domain, cytoplasmic.

Belongs to the SMIM7 family.

It is found in the membrane. The sequence is that of Small integral membrane protein 7 (smim7) from Xenopus tropicalis (Western clawed frog).